A 258-amino-acid chain; its full sequence is Phosphate import ATP-binding protein PstB (258 aa).

The ABC transporter domain occupies 5-247; that stretch reads LDLKGVNIYY…EKIFSNPTEK (243 aa). Position 37-44 (37-44) interacts with ATP; that stretch reads GASGCGKT.

The protein belongs to the ABC transporter superfamily. Phosphate importer (TC 3.A.1.7) family. In terms of assembly, the complex is composed of two ATP-binding proteins (PstB), two transmembrane proteins (PstC and PstA) and a solute-binding protein (PstS).

It is found in the cell membrane. The enzyme catalyses phosphate(out) + ATP + H2O = ADP + 2 phosphate(in) + H(+). In terms of biological role, part of the ABC transporter complex PstSACB involved in phosphate import. Responsible for energy coupling to the transport system. This Mycobacterium leprae (strain TN) protein is Phosphate import ATP-binding protein PstB.